We begin with the raw amino-acid sequence, 381 residues long: tRNA (guanine(6)-N2)-methyltransferase (381 aa).

Residues 43-157 (KLIPKINYLS…FDELIVGIDT (115 aa)) enclose the THUMP domain. S-adenosyl-L-methionine-binding positions include 173-177 (HPAHL), 204-206 (SGT), D261, 289-290 (DA), and N306.

It belongs to the methyltransferase superfamily.

The protein localises to the cytoplasm. The enzyme catalyses guanosine(6) in tRNA + S-adenosyl-L-methionine = N(2)-methylguanosine(6) in tRNA + S-adenosyl-L-homocysteine + H(+). S-adenosyl-L-methionine-dependent methyltransferase that catalyzes the methylation of the guanosine nucleotide at position 6 (m2G6) in tRNA(Cys). The chain is tRNA (guanine(6)-N2)-methyltransferase from Methanocaldococcus jannaschii (strain ATCC 43067 / DSM 2661 / JAL-1 / JCM 10045 / NBRC 100440) (Methanococcus jannaschii).